The sequence spans 643 residues: SURP and G-patch domain-containing protein 1 (643 aa).

Disordered regions lie at residues 48 to 69 (ARME…HPGE) and 97 to 119 (KAQT…SSLK). Phosphothreonine is present on Thr-128. An SURP motif 1 repeat occupies 187–229 (VIEKLARFVAEGGPELEKVAMEDYKDNPAFTFLHDKNSREFLY). Position 252 is a phosphoserine (Ser-252). The SURP motif 2 repeat unit spans residues 262-305 (LAEKLARFIADGGPEVETIALQNNRENQAFSFLYDPNSQGYRYY). Disordered stretches follow at residues 316 to 335 (KAGS…LRRK) and 360 to 393 (AVNP…DKVE). Ser-322 bears the Phosphoserine mark. The Nuclear localization signal motif lies at 378–384 (KRKRKSR). Phosphoserine occurs at positions 407, 409, 412, and 483. A G-patch domain is found at 560–607 (VENIGYQMLMKMGWKEGEGLGTEGQGIKNPVNKGATTIDGAGFGIDRP).

Component of the spliceosome.

The protein localises to the nucleus. In terms of biological role, plays a role in pre-mRNA splicing. The chain is SURP and G-patch domain-containing protein 1 (Sugp1) from Mus musculus (Mouse).